Here is a 254-residue protein sequence, read N- to C-terminus: Nickel import ATP-binding protein NikD (254 aa).

The region spanning 2–241 (PQQIELRNIA…PKHAVTRSLV (240 aa)) is the ABC transporter domain. 36 to 43 (GGSGSGKS) is a binding site for ATP.

The protein belongs to the ABC transporter superfamily. Nickel importer (TC 3.A.1.5.3) family. In terms of assembly, the complex is composed of two ATP-binding proteins (NikD and NikE), two transmembrane proteins (NikB and NikC) and a solute-binding protein (NikA).

Its subcellular location is the cell inner membrane. The catalysed reaction is Ni(2+)(out) + ATP + H2O = Ni(2+)(in) + ADP + phosphate + H(+). In terms of biological role, part of the ABC transporter complex NikABCDE involved in nickel import. Responsible for energy coupling to the transport system. The polypeptide is Nickel import ATP-binding protein NikD (Escherichia coli O157:H7).